A 258-amino-acid chain; its full sequence is Small ribosomal subunit protein uS2 (258 aa).

Residues 222–258 (GKALRDQDEAEQVEPVSQEEKDEVVAEAMSEADFEEQ) form a disordered region.

It belongs to the universal ribosomal protein uS2 family.

The polypeptide is Small ribosomal subunit protein uS2 (Campylobacter fetus subsp. fetus (strain 82-40)).